Here is a 142-residue protein sequence, read N- to C-terminus: Large ribosomal subunit protein uL23 (142 aa).

This sequence belongs to the universal ribosomal protein uL23 family.

Its function is as follows. This protein binds to a specific region on the 26S rRNA. The chain is Large ribosomal subunit protein uL23 (RPL25) from Cyberlindnera jadinii (Torula yeast).